The sequence spans 248 residues: Probable transcriptional regulatory protein PsycPRwf_1013 (248 aa).

Belongs to the TACO1 family.

The protein localises to the cytoplasm. This is Probable transcriptional regulatory protein PsycPRwf_1013 from Psychrobacter sp. (strain PRwf-1).